A 643-amino-acid polypeptide reads, in one-letter code: Pesticidal crystal protein Cry11Aa (643 aa).

This sequence belongs to the delta endotoxin family.

In terms of biological role, promotes colloidosmotic lysis by binding to the midgut epithelial cells of mosquitos. The sequence is that of Pesticidal crystal protein Cry11Aa (cry11Aa) from Bacillus thuringiensis subsp. israelensis.